Consider the following 204-residue polypeptide: Holliday junction branch migration complex subunit RuvA (204 aa).

A domain I region spans residues 1 to 64 (MIGKLKGTID…EDQLKLFGFM (64 aa)). Residues 65-143 (TALEREWFNL…AFAGEAINIA (79 aa)) form a domain II region. The tract at residues 144–151 (LKQELGEG) is flexible linker. Positions 152-204 (VAAAPVADAVSALTNLGYSRDQAANAVAAAMKTAGDDADSAKLIRLGLKELAR) are domain III.

Belongs to the RuvA family. Homotetramer. Forms an RuvA(8)-RuvB(12)-Holliday junction (HJ) complex. HJ DNA is sandwiched between 2 RuvA tetramers; dsDNA enters through RuvA and exits via RuvB. An RuvB hexamer assembles on each DNA strand where it exits the tetramer. Each RuvB hexamer is contacted by two RuvA subunits (via domain III) on 2 adjacent RuvB subunits; this complex drives branch migration. In the full resolvosome a probable DNA-RuvA(4)-RuvB(12)-RuvC(2) complex forms which resolves the HJ.

It is found in the cytoplasm. In terms of biological role, the RuvA-RuvB-RuvC complex processes Holliday junction (HJ) DNA during genetic recombination and DNA repair, while the RuvA-RuvB complex plays an important role in the rescue of blocked DNA replication forks via replication fork reversal (RFR). RuvA specifically binds to HJ cruciform DNA, conferring on it an open structure. The RuvB hexamer acts as an ATP-dependent pump, pulling dsDNA into and through the RuvAB complex. HJ branch migration allows RuvC to scan DNA until it finds its consensus sequence, where it cleaves and resolves the cruciform DNA. In Rhizobium leguminosarum bv. trifolii (strain WSM2304), this protein is Holliday junction branch migration complex subunit RuvA.